A 252-amino-acid chain; its full sequence is Thiazole synthase (252 aa).

Catalysis depends on Lys98, which acts as the Schiff-base intermediate with DXP. 1-deoxy-D-xylulose 5-phosphate-binding positions include Gly159, 185–186 (AG), and 207–208 (AT).

The protein belongs to the ThiG family. In terms of assembly, homotetramer. Forms heterodimers with either ThiH or ThiS.

Its subcellular location is the cytoplasm. It catalyses the reaction [ThiS sulfur-carrier protein]-C-terminal-Gly-aminoethanethioate + 2-iminoacetate + 1-deoxy-D-xylulose 5-phosphate = [ThiS sulfur-carrier protein]-C-terminal Gly-Gly + 2-[(2R,5Z)-2-carboxy-4-methylthiazol-5(2H)-ylidene]ethyl phosphate + 2 H2O + H(+). Its pathway is cofactor biosynthesis; thiamine diphosphate biosynthesis. In terms of biological role, catalyzes the rearrangement of 1-deoxy-D-xylulose 5-phosphate (DXP) to produce the thiazole phosphate moiety of thiamine. Sulfur is provided by the thiocarboxylate moiety of the carrier protein ThiS. In vitro, sulfur can be provided by H(2)S. In Mycolicibacterium smegmatis (strain ATCC 700084 / mc(2)155) (Mycobacterium smegmatis), this protein is Thiazole synthase.